Reading from the N-terminus, the 351-residue chain is Glycerol-1-phosphate dehydrogenase [NAD(P)+] (351 aa).

NAD(+) contacts are provided by residues 97-101 (GKVID) and 119-122 (TSPS). D124 contributes to the substrate binding site. S128 is an NAD(+) binding site. Residue D171 coordinates substrate. Zn(2+)-binding residues include D171 and H251. H255 serves as a coordination point for substrate. Position 267 (H267) interacts with Zn(2+).

Belongs to the glycerol-1-phosphate dehydrogenase family. In terms of assembly, homodimer. Zn(2+) is required as a cofactor.

The protein localises to the cytoplasm. The catalysed reaction is sn-glycerol 1-phosphate + NAD(+) = dihydroxyacetone phosphate + NADH + H(+). It carries out the reaction sn-glycerol 1-phosphate + NADP(+) = dihydroxyacetone phosphate + NADPH + H(+). The protein operates within membrane lipid metabolism; glycerophospholipid metabolism. In terms of biological role, catalyzes the NAD(P)H-dependent reduction of dihydroxyacetonephosphate (DHAP or glycerone phosphate) to glycerol 1-phosphate (G1P). The G1P thus generated is used as the glycerophosphate backbone of phospholipids in the cellular membranes of Archaea. In Saccharolobus islandicus (strain Y.N.15.51 / Yellowstone #2) (Sulfolobus islandicus), this protein is Glycerol-1-phosphate dehydrogenase [NAD(P)+].